A 237-amino-acid chain; its full sequence is Phosphoadenosine 5'-phosphosulfate reductase (237 aa).

The active-site Nucleophile; cysteine thiosulfonate intermediate is Cys231.

This sequence belongs to the PAPS reductase family. CysH subfamily.

Its subcellular location is the cytoplasm. It carries out the reaction [thioredoxin]-disulfide + sulfite + adenosine 3',5'-bisphosphate + 2 H(+) = [thioredoxin]-dithiol + 3'-phosphoadenylyl sulfate. It participates in sulfur metabolism; hydrogen sulfide biosynthesis; sulfite from sulfate: step 3/3. Its function is as follows. Catalyzes the formation of sulfite from phosphoadenosine 5'-phosphosulfate (PAPS) using thioredoxin as an electron donor. This Xylella fastidiosa (strain M23) protein is Phosphoadenosine 5'-phosphosulfate reductase.